A 197-amino-acid chain; its full sequence is Thymidine kinase (197 aa).

ATP is bound by residues 15 to 22 and 93 to 96; these read GPMFAGKT and DEVQ. Glutamate 94 (proton acceptor) is an active-site residue. 4 residues coordinate Zn(2+): cysteine 150, cysteine 153, cysteine 188, and histidine 191.

The protein belongs to the thymidine kinase family. Homotetramer.

It is found in the cytoplasm. The enzyme catalyses thymidine + ATP = dTMP + ADP + H(+). In Thermococcus kodakarensis (strain ATCC BAA-918 / JCM 12380 / KOD1) (Pyrococcus kodakaraensis (strain KOD1)), this protein is Thymidine kinase.